Consider the following 104-residue polypeptide: Iron-sulfur cluster assembly protein CyaY (104 aa).

Belongs to the frataxin family.

Functionally, involved in iron-sulfur (Fe-S) cluster assembly. May act as a regulator of Fe-S biogenesis. This Aeromonas hydrophila subsp. hydrophila (strain ATCC 7966 / DSM 30187 / BCRC 13018 / CCUG 14551 / JCM 1027 / KCTC 2358 / NCIMB 9240 / NCTC 8049) protein is Iron-sulfur cluster assembly protein CyaY.